The sequence spans 260 residues: MSAFDHSSDDTQETIGNSLRRRPLARKKLSEMVEEELEQMIRRGEFGEGGQLPSERELMAFFNVGRPSVREALAALKRKGLVQINNGERARVSRPSADTIISELSGLAKDFLSAPGGIAHFEQLRLFFESSLVRYAAENATDEQISLLSKALEINGQSLDDNAQFIRSDVDFHRVLAEIPGNPIFMATHVALLDWLIAARPKVSEQELHHHNNVSFQEHIAIFNAIRDRDPDEADRALQTHLKSVSATWRALGKSKKSAK.

The interval 1–21 is disordered; it reads MSAFDHSSDDTQETIGNSLRR. An HTH gntR-type domain is found at 27 to 95; sequence KKLSEMVEEE…NGERARVSRP (69 aa). The H-T-H motif DNA-binding region spans 55–74; it reads ERELMAFFNVGRPSVREALA.

This sequence belongs to the NanR family.

Transcriptional repressor that controls expression of the genes required for the catabolism of sialic acids. This chain is HTH-type transcriptional repressor NanR, found in Klebsiella aerogenes (strain ATCC 13048 / DSM 30053 / CCUG 1429 / JCM 1235 / KCTC 2190 / NBRC 13534 / NCIMB 10102 / NCTC 10006 / CDC 819-56) (Enterobacter aerogenes).